The sequence spans 219 residues: 2-hydroxy-3-keto-5-methylthiopentenyl-1-phosphate phosphatase (219 aa).

Belongs to the HAD-like hydrolase superfamily. MtnX family.

The catalysed reaction is 2-hydroxy-5-methylsulfanyl-3-oxopent-1-enyl phosphate + H2O = 1,2-dihydroxy-5-(methylsulfanyl)pent-1-en-3-one + phosphate. It participates in amino-acid biosynthesis; L-methionine biosynthesis via salvage pathway; L-methionine from S-methyl-5-thio-alpha-D-ribose 1-phosphate: step 4/6. Functionally, dephosphorylates 2-hydroxy-3-keto-5-methylthiopentenyl-1-phosphate (HK-MTPenyl-1-P) yielding 1,2-dihydroxy-3-keto-5-methylthiopentene (DHK-MTPene). This chain is 2-hydroxy-3-keto-5-methylthiopentenyl-1-phosphate phosphatase, found in Bacillus cereus (strain B4264).